The following is a 303-amino-acid chain: Glycine--tRNA ligase alpha subunit (303 aa).

It belongs to the class-II aminoacyl-tRNA synthetase family. As to quaternary structure, tetramer of two alpha and two beta subunits.

The protein localises to the cytoplasm. It carries out the reaction tRNA(Gly) + glycine + ATP = glycyl-tRNA(Gly) + AMP + diphosphate. The polypeptide is Glycine--tRNA ligase alpha subunit (Klebsiella pneumoniae (strain 342)).